We begin with the raw amino-acid sequence, 124 residues long: MATVNQLVRKPRQKPDAKSNVAALQACPQRRGVCTRVYTTTPKKPNSALRKVCRVRLTNGFEVSSYIGGEGHNLQEHSVVLIRGGRVKDLPGVRYHTVRGTLDCAGVSSRKQARSKYGAKRPKS.

A disordered region spans residues 1-22 (MATVNQLVRKPRQKPDAKSNVA). Residue Asp89 is modified to 3-methylthioaspartic acid.

It belongs to the universal ribosomal protein uS12 family. As to quaternary structure, part of the 30S ribosomal subunit. Contacts proteins S8 and S17. May interact with IF1 in the 30S initiation complex.

Functionally, with S4 and S5 plays an important role in translational accuracy. Interacts with and stabilizes bases of the 16S rRNA that are involved in tRNA selection in the A site and with the mRNA backbone. Located at the interface of the 30S and 50S subunits, it traverses the body of the 30S subunit contacting proteins on the other side and probably holding the rRNA structure together. The combined cluster of proteins S8, S12 and S17 appears to hold together the shoulder and platform of the 30S subunit. This chain is Small ribosomal subunit protein uS12, found in Pseudoalteromonas atlantica (strain T6c / ATCC BAA-1087).